Reading from the N-terminus, the 273-residue chain is Serine acetyltransferase (273 aa).

Belongs to the transferase hexapeptide repeat family. Homohexamer. Dimer of a homotrimer.

It localises to the cytoplasm. The catalysed reaction is L-serine + acetyl-CoA = O-acetyl-L-serine + CoA. Its pathway is amino-acid biosynthesis; L-cysteine biosynthesis; L-cysteine from L-serine: step 1/2. The protein is Serine acetyltransferase (cysE) of Shigella flexneri.